The following is a 267-amino-acid chain: Acyl-[acyl-carrier-protein]--UDP-N-acetylglucosamine O-acyltransferase (267 aa).

Belongs to the transferase hexapeptide repeat family. LpxA subfamily. Homotrimer.

It is found in the cytoplasm. The enzyme catalyses a (3R)-hydroxyacyl-[ACP] + UDP-N-acetyl-alpha-D-glucosamine = a UDP-3-O-[(3R)-3-hydroxyacyl]-N-acetyl-alpha-D-glucosamine + holo-[ACP]. Its pathway is glycolipid biosynthesis; lipid IV(A) biosynthesis; lipid IV(A) from (3R)-3-hydroxytetradecanoyl-[acyl-carrier-protein] and UDP-N-acetyl-alpha-D-glucosamine: step 1/6. In terms of biological role, involved in the biosynthesis of lipid A, a phosphorylated glycolipid that anchors the lipopolysaccharide to the outer membrane of the cell. The protein is Acyl-[acyl-carrier-protein]--UDP-N-acetylglucosamine O-acyltransferase of Hamiltonella defensa subsp. Acyrthosiphon pisum (strain 5AT).